A 372-amino-acid chain; its full sequence is Aminomethyltransferase (372 aa).

The protein belongs to the GcvT family. As to quaternary structure, the glycine cleavage system is composed of four proteins: P, T, L and H.

It catalyses the reaction N(6)-[(R)-S(8)-aminomethyldihydrolipoyl]-L-lysyl-[protein] + (6S)-5,6,7,8-tetrahydrofolate = N(6)-[(R)-dihydrolipoyl]-L-lysyl-[protein] + (6R)-5,10-methylene-5,6,7,8-tetrahydrofolate + NH4(+). The glycine cleavage system catalyzes the degradation of glycine. The sequence is that of Aminomethyltransferase from Paraburkholderia phymatum (strain DSM 17167 / CIP 108236 / LMG 21445 / STM815) (Burkholderia phymatum).